Here is a 529-residue protein sequence, read N- to C-terminus: Listeriolysin O (529 aa).

The N-terminal stretch at 1–24 (MKKIMLVFITLILISLPIAQQTEA) is a signal peptide. Residues 35–54 (SISSMAPPASPPASPKTPIE) form a disordered region. 4 beta stranded membrane-spanning segments follow: residues 214 to 227 (ESQL…AFKA), 234 to 243 (VNFGAISEGK), 312 to 321 (STKVKAAFDA), and 329 to 341 (SGDV…IKNS). Residues 483-493 (ECTGLAWEWWR) carry the Conserved undecapeptide motif. The short motif at 515–516 (TL) is the Cholesterol binding element.

Belongs to the cholesterol-dependent cytolysin family. As to quaternary structure, homooligomeric pore complex of 35 to 50 subunits; when inserted in the host membrane.

It is found in the secreted. The protein localises to the host membrane. Its subcellular location is the host cell membrane. Activity of listeriolysin O is regulated on multiple levels. It should be high in the phagosome, thereby allowing escape of the bacteria from the phagosomal compartment. Then, once inside the host cytosol, the activity must be controlled to prevent lysis of the host plasma membrane and loss of the intracellular environment. Functionally, a cholesterol-dependent toxin that causes cytolysis by forming pores in cholesterol containing host membranes. After binding to target membranes, the protein undergoes a major conformation change, leading to its insertion in the host membrane and formation of an oligomeric pore complex. Cholesterol is required for binding to host membranes, membrane insertion and pore formation; cholesterol binding is mediated by a Thr-Leu pair in the C-terminus. Acts as a major virulence factor required for the escape of bacteria from phagosomal vacuoles and entry into the host cytosol. Can be reversibly inactivated by oxidation. This Listeria monocytogenes serotype 4a (strain HCC23) protein is Listeriolysin O (hly).